The primary structure comprises 428 residues: E3 ubiquitin-protein ligase RNF128 (428 aa).

A signal peptide spans 1–38; that stretch reads MGPPPGIGVYCRGGCGAARLLAWCFLLALSPHAPGSRG. N48, N59, and N101 each carry an N-linked (GlcNAc...) asparagine glycan. The PA domain maps to 75-183; sequence SPLEPVSGVL…LKGTKILQSI (109 aa). A helical membrane pass occupies residues 208–228; it reads IFFVSVSFFIITAATVGYFIF. The RING-type; atypical zinc finger occupies 277–318; the sequence is CAVCIELYKPNDLVRILTCNHIFHKTCVDPWLLEHRTCPMCK. Residues 342 to 351 show a composition bias toward polar residues; sequence VSNEASNTAS. The disordered stretch occupies residues 342–428; the sequence is VSNEASNTAS…QEAAVREIKS (87 aa).

Auto-ubiquitinated. Controls the development of T-cell clonal anergy by ubiquitination. In terms of tissue distribution, expressed in brain, kidney, heart, liver, ovary, testis and thymus. Expression increased as early as 4 hours by 5- to 7-fold in anergized cultures as compared to resting or activated cells.

The protein resides in the cytoplasm. It localises to the endomembrane system. The protein localises to the cytoskeleton. Its subcellular location is the perinuclear region. It catalyses the reaction S-ubiquitinyl-[E2 ubiquitin-conjugating enzyme]-L-cysteine + [acceptor protein]-L-lysine = [E2 ubiquitin-conjugating enzyme]-L-cysteine + N(6)-ubiquitinyl-[acceptor protein]-L-lysine.. Its pathway is protein modification; protein ubiquitination. Functionally, E3 ubiquitin-protein ligase that catalyzes 'Lys-27', 'Lys-48'- or 'Lys-63'-linked polyubiquitin chains formation and plays a role in different biological processes such as modulation of immune response, cytoskeletal dynamics or protein homeostasis. Inhibits IL2 and IL4 transcription, thereby playing an important role in the induction of the anergic phenotype, a long-term stable state of T-lymphocyte unresponsiveness to antigenic stimulation associated with the blockade of interleukin production. Ubiquitinates ARPC5 with 'Lys-48' linkages and COR1A with 'Lys-63' linkages leading to their degradation, down-regulation of these cytoskeletal components results in impaired lamellipodium formation and reduced accumulation of F-actin at the immunological synapse. Functions in the patterning of the dorsal ectoderm; sensitizes ectoderm to respond to neural-inducing signals. Plays a positive role in innate immune response by promoting 'Lys-63'-linked ubiquitination of TBK1 after RNA- or DNA-virus infection. Regulates alveolar macrophage activation and neutrophil infiltration by interacting with TLR4, targeting it for degradation, and inhibiting NF-kappa-B activation, hence decreasing pro-inflammatory cytokines. Negatively regulates the IL-3/STAT5 signaling pathway by facilitating 'Lys-27'-linked polyubiquitination of IL3RA leading to its degradation via lysosomal pathway. Directly regulates the N-glycosylation process in the endoplasmic reticulum by targeting the glycosyl-transferase RPN1 for ubiquitination and degradation. Other substrates targeted for degradation by RNF128 include transmembrane proteins CD40L, CD83 or the tetraspanin CD151. This is E3 ubiquitin-protein ligase RNF128 (Rnf128) from Mus musculus (Mouse).